The sequence spans 391 residues: S-adenosylmethionine synthase (391 aa).

The disordered stretch occupies residues 1 to 20; that stretch reads MPRSDYLFTSESVSEGHPDK. ATP is bound at residue His-17. Asp-19 is a binding site for Mg(2+). Glu-45 lines the K(+) pocket. Glu-58 and Gln-102 together coordinate L-methionine. The interval 102 to 112 is flexible loop; it reads QSADIAQGVDA. Residues 169-171, 235-236, Asp-244, 250-251, Ala-267, and Lys-271 contribute to the ATP site; these read DAK, KF, and RK. Asp-244 is a binding site for L-methionine. Residue Lys-275 participates in L-methionine binding.

It belongs to the AdoMet synthase family. In terms of assembly, homotetramer; dimer of dimers. Requires Mg(2+) as cofactor. K(+) is required as a cofactor.

It is found in the cytoplasm. The enzyme catalyses L-methionine + ATP + H2O = S-adenosyl-L-methionine + phosphate + diphosphate. Its pathway is amino-acid biosynthesis; S-adenosyl-L-methionine biosynthesis; S-adenosyl-L-methionine from L-methionine: step 1/1. Functionally, catalyzes the formation of S-adenosylmethionine (AdoMet) from methionine and ATP. The overall synthetic reaction is composed of two sequential steps, AdoMet formation and the subsequent tripolyphosphate hydrolysis which occurs prior to release of AdoMet from the enzyme. The chain is S-adenosylmethionine synthase from Methylorubrum extorquens (strain CM4 / NCIMB 13688) (Methylobacterium extorquens).